A 940-amino-acid chain; its full sequence is UvrABC system protein A (940 aa).

31-38 (GLSGSGKS) lines the ATP pocket. A C4-type zinc finger spans residues 253–280 (CPICGYSMRELEPRLFSFNNPAGACPTC). 2 consecutive ABC transporter domains span residues 310–587 (WDRR…PESL) and 607–937 (ANPE…RFLK). 640–647 (GVSGSGKS) lines the ATP pocket. The C4-type zinc finger occupies 740 to 766 (CEACQGDGVIKVEMHFLPDIYVPCDQC).

This sequence belongs to the ABC transporter superfamily. UvrA family. Forms a heterotetramer with UvrB during the search for lesions. Interacts with TRCF (Mfd). UvrB and TRCF binding to UvrA could be mutually exclusive.

It localises to the cytoplasm. Its function is as follows. The UvrABC repair system catalyzes the recognition and processing of DNA lesions. UvrA is an ATPase and a DNA-binding protein. A damage recognition complex composed of 2 UvrA and 2 UvrB subunits scans DNA for abnormalities. When the presence of a lesion has been verified by UvrB, the UvrA molecules dissociate. The protein is UvrABC system protein A of Escherichia coli (strain K12).